The following is a 103-amino-acid chain: Small ribosomal subunit protein bS6c (103 aa).

Belongs to the bacterial ribosomal protein bS6 family.

It localises to the plastid. It is found in the chloroplast. Binds together with bS18 to 16S ribosomal RNA. The polypeptide is Small ribosomal subunit protein bS6c (Thalassiosira pseudonana (Marine diatom)).